Here is a 96-residue protein sequence, read N- to C-terminus: Bacterial microcompartment shell protein EutM (96 aa).

Positions 3–87 (ALGMIETRGL…PHGDLEEVFP (85 aa)) constitute a BMC domain.

Belongs to the bacterial microcompartments protein family. As to quaternary structure, homohexamer with a central pore of up to 8.6 Angstroms diameter. The hexamers pack into a two-dimensional array. Interacts with EutQ; a probably cytoplasm-facing helix (Val-49 to Gln-64) interacts with N-terminus of EutQ.

The protein resides in the bacterial microcompartment. It functions in the pathway amine and polyamine degradation; ethanolamine degradation. Functionally, probably a major component of the bacterial microcompartment (BMC) shell dedicated to ethanolamine degradation. Each homohexamer has a central pore with an opening of up to 8.6 Angstroms. A positively-charged funnel leads to the pore from each side of the hexamer. The pore probably allows metabolite passage into and out of the BMC. Expression of eutK, eutL, eutM, eutN, eutS (eutSMNLK) in E.coli leads to formation of a single BMC. Expression alone leads to thick filaments that interfere with cell separation. Coexpression of eutQ with eutSMNLK permits E.coli to make cells with more than one mobile BMC, as is usual in vivo. May play a role in BMC shell biogenesis. Can replace homolog pduA in the pdu operon, cells grow better than wild-type on 1,2-propanediol and vitamin B12. Protein is incorporated into the pdu BMC microcompartment. The ethanolamine (EA) catabolic bacterial microcompartment (BMC) probably concentrates low levels of ethanolamine catabolic enzymes, concentrates volatile reaction intermediates, keeps the level of toxic acetaldehyde low, generates enough acetyl-CoA to support cell growth, and maintains a pool of free coenzyme A (CoA) and NAD. Deletion of BMC genes (eutK, eutL, eutM) restores growth of eutD deletions, suggesting there are dedicated pools of coenzyme A (CoA) and NAD in the BMC. In terms of biological role, expression of the eut operon allows this bacteria to use ethanolamine as a carbon, nitrogen and energy source. It relies on cobalamin (vitamin B12) both as a cofactor for the ethanolamine ammonia-lyase (EAL) activity and to induce the operon. EA enhances bacterial survival in macrophages in a concentration-dependent manner, suggesting it is an important nutrient during infection. This is Bacterial microcompartment shell protein EutM from Salmonella typhimurium (strain LT2 / SGSC1412 / ATCC 700720).